A 443-amino-acid chain; its full sequence is Probable 26S proteasome regulatory subunit 4 (443 aa).

Positions 1–53 (MGQQQSGFGGRGNDRGAGDGEKKEKKKYEAPIPSRIGKKKKGSKGPDAASKLP) are disordered. Basic and acidic residues predominate over residues 12-29 (GNDRGAGDGEKKEKKKYE). 229 to 236 (GCPGTGKT) contributes to the ATP binding site.

The protein belongs to the AAA ATPase family.

The protein localises to the cytoplasm. Its subcellular location is the nucleus. In terms of biological role, the 26S proteasome is involved in the ATP-dependent degradation of ubiquitinated proteins. The regulatory (or ATPase) complex confers ATP dependency and substrate specificity to the 26S complex. May play a role in the degradation of microtubule severing protein mei-1. This Caenorhabditis elegans protein is Probable 26S proteasome regulatory subunit 4 (rpt-2).